The following is a 178-amino-acid chain: MDQKARIKIDGVIVCEGKTDQAKLQQIFDVDVITTNGSALKKETINLIKKISEKQTVILLLDPDQQGKKIRSKLEQHLTNYYNCYVDMNARLKNAKKAGIAEMETSALIAALNNRVAITKNANQSILWDQYLSLKLNDKKKRLLLCNNLNLPYFNHKQLFKKLNLLNLTFQDVWKHLK.

Residues 10-94 (DGVIVCEGKT…YVDMNARLKN (85 aa)) form the Toprim domain. Residues E16, D62, and D64 each coordinate Mg(2+).

The protein belongs to the ribonuclease M5 family. Mg(2+) serves as cofactor.

The protein localises to the cytoplasm. It catalyses the reaction Endonucleolytic cleavage of RNA, removing 21 and 42 nucleotides, respectively, from the 5'- and 3'-termini of a 5S-rRNA precursor.. Required for correct processing of both the 5' and 3' ends of 5S rRNA precursor. Cleaves both sides of a double-stranded region yielding mature 5S rRNA in one step. In Mycoplasma genitalium (strain ATCC 33530 / DSM 19775 / NCTC 10195 / G37) (Mycoplasmoides genitalium), this protein is Ribonuclease M5 (rnmV).